We begin with the raw amino-acid sequence, 144 residues long: HMG1/2-like protein (144 aa).

2 disordered regions span residues 1 to 42 (MKGG…PPSA) and 85 to 144 (PFIS…EDDD). Composition is skewed to basic and acidic residues over residues 8–35 (AKSD…DPNK) and 89–99 (KAEKRKQEYEK). Positions 36-105 (PKRPPSAFFV…EYEKNLQAYN (70 aa)) form a DNA-binding region, HMG box. A compositionally biased stretch (acidic residues) spans 126 to 144 (NDDDEDQDGSGEDDSEDDD).

Belongs to the HMGB family. Expressed at higher levels in dark-grown tissues, such as roots; and at lower levels in light-grown tissues, such as cotyledons and stems.

The protein resides in the nucleus. The chain is HMG1/2-like protein from Ipomoea nil (Japanese morning glory).